Reading from the N-terminus, the 284-residue chain is D-tagatose-1,6-bisphosphate aldolase subunit GatY (284 aa).

The active-site Proton donor is Asp82. Zn(2+) is bound by residues His83 and His180. Residue Gly181 coordinates dihydroxyacetone phosphate. His208 contributes to the Zn(2+) binding site. Residues 209-211 (GAS) and 230-233 (NVAT) each bind dihydroxyacetone phosphate.

The protein belongs to the class II fructose-bisphosphate aldolase family. TagBP aldolase GatY subfamily. Forms a complex with GatZ. Requires Zn(2+) as cofactor.

It carries out the reaction D-tagatofuranose 1,6-bisphosphate = D-glyceraldehyde 3-phosphate + dihydroxyacetone phosphate. It participates in carbohydrate metabolism; D-tagatose 6-phosphate degradation; D-glyceraldehyde 3-phosphate and glycerone phosphate from D-tagatose 6-phosphate: step 2/2. Functionally, catalytic subunit of the tagatose-1,6-bisphosphate aldolase GatYZ, which catalyzes the reversible aldol condensation of dihydroxyacetone phosphate (DHAP or glycerone-phosphate) with glyceraldehyde 3-phosphate (G3P) to produce tagatose 1,6-bisphosphate (TBP). Requires GatZ subunit for full activity and stability. Is involved in the catabolism of galactitol. The polypeptide is D-tagatose-1,6-bisphosphate aldolase subunit GatY (Escherichia coli O45:K1 (strain S88 / ExPEC)).